The sequence spans 116 residues: Histone H2B (116 aa).

Basic residues predominate over residues 1 to 11; the sequence is TSGKAAKKAGK. A disordered region spans residues 1–25; it reads TSGKAAKKAGKAQKSITKGDKKKRK. An N6-acetyllysine mark is found at K4, K11, and K14. S103 carries an O-linked (GlcNAc) serine glycan. A Glycyl lysine isopeptide (Lys-Gly) (interchain with G-Cter in ubiquitin) cross-link involves residue K111.

In terms of assembly, the nucleosome is a histone octamer containing two molecules each of H2A, H2B, H3 and H4 assembled in one H3-H4 heterotetramer and two H2A-H2B heterodimers. The octamer wraps approximately 147 bp of DNA. Monoubiquitination gives a specific tag for epigenetic transcriptional activation and is also prerequisite for histone H3 'Lys-4' and 'Lys-79' methylation. Post-translationally, glcNAcylation at Ser-103 promotes monoubiquitination of Lys-111. It fluctuates in response to extracellular glucose, and associates with transcribed genes.

The protein resides in the nucleus. The protein localises to the chromosome. In terms of biological role, core component of nucleosome. Nucleosomes wrap and compact DNA into chromatin, limiting DNA accessibility to the cellular machineries which require DNA as a template. Histones thereby play a central role in transcription regulation, DNA repair, DNA replication and chromosomal stability. DNA accessibility is regulated via a complex set of post-translational modifications of histones, also called histone code, and nucleosome remodeling. A mixture of histones H2B and H4 has antimicrobial activity against the Gram-positive bacterium M.luteus. This Penaeus vannamei (Whiteleg shrimp) protein is Histone H2B.